We begin with the raw amino-acid sequence, 140 residues long: MAIERTLSIIKPDATRRNLTGKINAKFEEAGLRIVAQKRIHLSLAQAQKFYGVHKDRPFFGELTEFMASEPVVVQVLEGEGAIAKNREVMGATNPANADAGTIRKEFALSVGENSVHGSDAPETAAEEIAFFFSGLELVG.

ATP is bound by residues Lys-11, Phe-59, Arg-87, Thr-93, Arg-104, and Asn-114. His-117 functions as the Pros-phosphohistidine intermediate in the catalytic mechanism.

The protein belongs to the NDK family. Homotetramer. Mg(2+) is required as a cofactor.

The protein localises to the cytoplasm. The catalysed reaction is a 2'-deoxyribonucleoside 5'-diphosphate + ATP = a 2'-deoxyribonucleoside 5'-triphosphate + ADP. It carries out the reaction a ribonucleoside 5'-diphosphate + ATP = a ribonucleoside 5'-triphosphate + ADP. Major role in the synthesis of nucleoside triphosphates other than ATP. The ATP gamma phosphate is transferred to the NDP beta phosphate via a ping-pong mechanism, using a phosphorylated active-site intermediate. This chain is Nucleoside diphosphate kinase, found in Cereibacter sphaeroides (strain ATCC 17029 / ATH 2.4.9) (Rhodobacter sphaeroides).